A 1016-amino-acid polypeptide reads, in one-letter code: Mediator of RNA polymerase II transcription subunit 5 (1016 aa).

It belongs to the Mediator complex subunit 5 family. In terms of assembly, component of the Mediator complex.

Its subcellular location is the nucleus. In terms of biological role, component of the Mediator complex, a coactivator involved in the regulated transcription of nearly all RNA polymerase II-dependent genes. Mediator functions as a bridge to convey information from gene-specific regulatory proteins to the basal RNA polymerase II transcription machinery. Mediator is recruited to promoters by direct interactions with regulatory proteins and serves as a scaffold for the assembly of a functional preinitiation complex with RNA polymerase II and the general transcription factors. In Aspergillus terreus (strain NIH 2624 / FGSC A1156), this protein is Mediator of RNA polymerase II transcription subunit 5 (nut1).